The sequence spans 299 residues: Probable endonuclease 4 (299 aa).

9 residues coordinate Zn(2+): His69, His110, Glu145, Asp179, His182, His214, Asp227, His229, and Glu259.

The protein belongs to the AP endonuclease 2 family. Requires Zn(2+) as cofactor.

The enzyme catalyses Endonucleolytic cleavage to 5'-phosphooligonucleotide end-products.. Functionally, endonuclease IV plays a role in DNA repair. It cleaves phosphodiester bonds at apurinic or apyrimidinic (AP) sites, generating a 3'-hydroxyl group and a 5'-terminal sugar phosphate. This Geobacillus kaustophilus (strain HTA426) protein is Probable endonuclease 4.